The following is a 261-amino-acid chain: 3beta-hydroxysteroid dehydrogenase 1 (261 aa).

Residues 65–66, Asn-92, Tyr-158, and Lys-162 each bind NAD(+); that span reads DV. Tyr-158 functions as the Proton acceptor in the catalytic mechanism.

The protein belongs to the short-chain dehydrogenases/reductases (SDR) family.

It catalyses the reaction 3-oxo-5beta-cholan-24-oate + NADH + H(+) = isolithocholate + NAD(+). The catalysed reaction is 12alpha-hydroxy-3-oxo-5beta-cholan-24-oate + NADH + H(+) = isodeoxycholate + NAD(+). The enzyme catalyses 7alpha,12alpha-dihydroxy-3-oxo-5beta-cholan-24-oate + NADH + H(+) = isocholate + NAD(+). It carries out the reaction 3-oxochenodeoxycholate + NADH + H(+) = isochenodeoxycholate + NAD(+). In terms of biological role, involved in the modification of secondary bile acids into iso-bile acids (3beta-bile acids) via epimerization of the 3-OH group through a 3-oxo-intermediate. Catalyzes the reduction of 12-alpha-hydroxy-3-oxo-5-beta-cholan-24-oate (3-oxo-DCA) and 3-oxo-5-beta-cholan-24-oate (3-oxo-LCA) to yield isodeoxycholate (isoDCA) and isolithocholate (isoLCA), respectively. Is also able to catalyze the reduction of 3-dehydrocholate (3-oxo-CA or 7alpha,12alpha-dihydroxy-3-oxo-5beta-cholan-24-oate) and 7-alpha-hydroxy-3-oxo-5-beta-cholan-24-oate (3-oxo-CDCA), into isocholate (isoCA) and isochenodeoxycholate (isoCDCA), respectively. Prefers NADH to NADPH as cosubstrate. The conversion of the abundant bile acid deoxycholate (DCA) into isoDCA by the gut bacterium E.lenta favors the growth of the keystone commensal genus Bacteroides, since isoDCA is less cytotoxic than its parent compound, DCA; iso-bile acids have thus a potential role in modulating gut community composition. This chain is 3beta-hydroxysteroid dehydrogenase 1, found in Eggerthella lenta (strain ATCC 25559 / DSM 2243 / CCUG 17323 / JCM 9979 / KCTC 3265 / NCTC 11813 / VPI 0255 / 1899 B) (Eubacterium lentum).